We begin with the raw amino-acid sequence, 109 residues long: uncharacterized protein (109 aa).

An N-terminal signal peptide occupies residues 1–25; sequence MKGIFLVVQLGFSIMVFLFLAAVNW. The helical transmembrane segment at 73–95 threads the bilayer; sequence YPVMSALMIISFLYVLAALFLLI.

The protein localises to the membrane. This is an uncharacterized protein from Bacillus subtilis (strain 168).